Reading from the N-terminus, the 618-residue chain is Chaperone protein HtpG (618 aa).

The segment at 1-331 (MAKHTFQTEV…SEDLPLNVSR (331 aa)) is a; substrate-binding. The segment at 332 to 541 (EILQQNRILA…EDDPNFAMIK (210 aa)) is b. Residues 542 to 618 (MMRQMGNALG…RLNAMLERAI (77 aa)) form a c region.

This sequence belongs to the heat shock protein 90 family. As to quaternary structure, homodimer.

It is found in the cytoplasm. Functionally, molecular chaperone. Has ATPase activity. The sequence is that of Chaperone protein HtpG from Wolinella succinogenes (strain ATCC 29543 / DSM 1740 / CCUG 13145 / JCM 31913 / LMG 7466 / NCTC 11488 / FDC 602W) (Vibrio succinogenes).